We begin with the raw amino-acid sequence, 387 residues long: Phosphoglycerate kinase (387 aa).

Substrate is bound by residues aspartate 21 to asparagine 23, arginine 36, histidine 59 to arginine 62, arginine 113, and arginine 146. ATP contacts are provided by residues lysine 197, glutamate 314, and glycine 340–threonine 343.

Belongs to the phosphoglycerate kinase family. In terms of assembly, monomer.

It is found in the cytoplasm. The enzyme catalyses (2R)-3-phosphoglycerate + ATP = (2R)-3-phospho-glyceroyl phosphate + ADP. It functions in the pathway carbohydrate degradation; glycolysis; pyruvate from D-glyceraldehyde 3-phosphate: step 2/5. This Pseudomonas paraeruginosa (strain DSM 24068 / PA7) (Pseudomonas aeruginosa (strain PA7)) protein is Phosphoglycerate kinase.